A 333-amino-acid chain; its full sequence is Taste receptor type 2 member 110 (333 aa).

Residues 1 to 13 (MFSQIISTSDIFT) are Extracellular-facing. Residues 14–34 (FTIILFVELVIGILGNGFIAL) form a helical membrane-spanning segment. The Cytoplasmic segment spans residues 35 to 60 (VNIMDWTKRRSISSADQILTALAITR). Residues 61–81 (FLYVWFMIICILLFMLCPHLL) form a helical membrane-spanning segment. Residues 82 to 89 (TRSEIVTS) lie on the Extracellular side of the membrane. A helical transmembrane segment spans residues 90–110 (IGIIWIVNNHFSVWLATCLGV). At 111–133 (FYFLKIANFSNSLFLYLKWRVKK) the chain is on the cytoplasmic side. The helical transmembrane segment at 134–154 (VVLMIIQVSMIFLILNLLSLS) threads the bilayer. Residues 155–205 (MYDQFSIDVYEGNTSYNLGDSTPFPTISLFINSSKVFVITNSSHIFLPINS) are Extracellular-facing. Residues Asn186 and Asn195 are each glycosylated (N-linked (GlcNAc...) asparagine). A helical membrane pass occupies residues 206–226 (LFMLIPFTVSLVAFLMLIFSL). Topologically, residues 227–255 (WKHHKKMQVNAKPPRDASTMAHIKALQTG) are cytoplasmic. A helical membrane pass occupies residues 256–276 (FSFLLLYAVYLLFIVIGMLSL). Residues 277–283 (RLIGGKL) are Extracellular-facing. A helical transmembrane segment spans residues 284–304 (ILLFDHISGIGFPISHSFVLI). Residues 305-333 (LGNNKLRQASLSVLHCLRCRSKDMDTMGP) lie on the Cytoplasmic side of the membrane.

The protein belongs to the G-protein coupled receptor T2R family.

It is found in the membrane. Functionally, gustducin-coupled receptor implicated in the perception of bitter compounds in the oral cavity and the gastrointestinal tract. Signals through PLCB2 and the calcium-regulated cation channel TRPM5. This chain is Taste receptor type 2 member 110, found in Mus musculus (Mouse).